A 207-amino-acid polypeptide reads, in one-letter code: Transcription factor bHLH149 (207 aa).

Positions 1 to 25 are disordered; sequence MVESLFPSIENTGESSRRKKPRISE. The bHLH domain occupies 132 to 181; sequence KSRKGLTETNRIKLPAVERKLKILGRLVPGCRKVSVPNLLDEATDYIAAL.

Homodimer. Interacts with PRE3.

It localises to the nucleus. Functionally, atypical bHLH transcription factor probably unable to bind DNA. Negatively regulates brassinosteroid signaling. The polypeptide is Transcription factor bHLH149 (BHLH149) (Arabidopsis thaliana (Mouse-ear cress)).